Consider the following 626-residue polypeptide: Phosphomethylpyrimidine synthase (626 aa).

Residues asparagine 237, methionine 266, tyrosine 295, histidine 331, 351–353 (SRG), 392–395 (DGLR), and glutamate 431 contribute to the substrate site. Histidine 435 is a Zn(2+) binding site. Tyrosine 458 provides a ligand contact to substrate. Zn(2+) is bound at residue histidine 499. [4Fe-4S] cluster is bound by residues cysteine 579, cysteine 582, and cysteine 587.

It belongs to the ThiC family. Homodimer. [4Fe-4S] cluster is required as a cofactor.

The enzyme catalyses 5-amino-1-(5-phospho-beta-D-ribosyl)imidazole + S-adenosyl-L-methionine = 4-amino-2-methyl-5-(phosphooxymethyl)pyrimidine + CO + 5'-deoxyadenosine + formate + L-methionine + 3 H(+). Its pathway is cofactor biosynthesis; thiamine diphosphate biosynthesis. Catalyzes the synthesis of the hydroxymethylpyrimidine phosphate (HMP-P) moiety of thiamine from aminoimidazole ribotide (AIR) in a radical S-adenosyl-L-methionine (SAM)-dependent reaction. The chain is Phosphomethylpyrimidine synthase from Cupriavidus pinatubonensis (strain JMP 134 / LMG 1197) (Cupriavidus necator (strain JMP 134)).